The sequence spans 178 residues: Interleukin-10 (178 aa).

The N-terminal stretch at 1–18 (MPNPVLLYCLVLLAGMGT) is a signal peptide. 2 disulfides stabilise this stretch: C30–C126 and C80–C132. A glycan (N-linked (GlcNAc...) asparagine) is linked at N134.

Belongs to the IL-10 family. In terms of assembly, homodimer. Interacts with IL10RA and IL10RB.

Its subcellular location is the secreted. In terms of biological role, major immune regulatory cytokine that acts on many cells of the immune system where it has profound anti-inflammatory functions, limiting excessive tissue disruption caused by inflammation. Mechanistically, IL10 binds to its heterotetrameric receptor comprising IL10RA and IL10RB leading to JAK1 and STAT2-mediated phosphorylation of STAT3. In turn, STAT3 translocates to the nucleus where it drives expression of anti-inflammatory mediators. Targets antigen-presenting cells (APCs) such as macrophages and monocytes and inhibits their release of pro-inflammatory cytokines including granulocyte-macrophage colony-stimulating factor /GM-CSF, granulocyte colony-stimulating factor/G-CSF, IL-1 alpha, IL-1 beta, IL-6, IL-8 and TNF-alpha. Also interferes with antigen presentation by reducing the expression of MHC-class II and co-stimulatory molecules, thereby inhibiting their ability to induce T cell activation. In addition, controls the inflammatory response of macrophages by reprogramming essential metabolic pathways including mTOR signaling. This Marmota monax (Woodchuck) protein is Interleukin-10 (IL10).